The primary structure comprises 359 residues: Ras association domain-containing protein 7 (359 aa).

One can recognise a Ras-associating domain in the interval 6–89 (VAMELKVWVD…VQFVLRRTGP (84 aa)). Positions 87 to 123 (TGPSLSGRPSSDNCPPPERCPVRASLPPKPSAIPGRE) are disordered. Positions 89–99 (PSLSGRPSSDN) are enriched in polar residues. 2 coiled-coil regions span residues 180–208 (WEQE…TAEH) and 242–301 (AAER…QQFI). The segment at 339-359 (SHILVSSLSPEVPPMRQSSWR) is disordered.

In terms of assembly, interacts with MAP2K7 and GTP-bound NRAS. Post-translationally, polyubiquitinated and degraded by the proteasome upon prolonged stress stimuli.

The protein resides in the cytoplasm. The protein localises to the cytoskeleton. It localises to the microtubule organizing center. Its subcellular location is the centrosome. Its function is as follows. Negatively regulates stress-induced JNK activation and apoptosis by promoting MAP2K7 phosphorylation and inhibiting its ability to activate JNK. Following prolonged stress, anti-apoptotic effect stops because of degradation of RASSF7 protein via the ubiquitin-proteasome pathway. Required for the activation of AURKB and chromosomal congression during mitosis where it stimulates microtubule polymerization. The chain is Ras association domain-containing protein 7 (Rassf7) from Mus musculus (Mouse).